The following is a 148-amino-acid chain: D-aminoacyl-tRNA deacylase (148 aa).

The short motif at 137–138 (GP) is the Gly-cisPro motif, important for rejection of L-amino acids element.

This sequence belongs to the DTD family. Homodimer.

The protein localises to the cytoplasm. It carries out the reaction glycyl-tRNA(Ala) + H2O = tRNA(Ala) + glycine + H(+). The enzyme catalyses a D-aminoacyl-tRNA + H2O = a tRNA + a D-alpha-amino acid + H(+). An aminoacyl-tRNA editing enzyme that deacylates mischarged D-aminoacyl-tRNAs. Also deacylates mischarged glycyl-tRNA(Ala), protecting cells against glycine mischarging by AlaRS. Acts via tRNA-based rather than protein-based catalysis; rejects L-amino acids rather than detecting D-amino acids in the active site. By recycling D-aminoacyl-tRNA to D-amino acids and free tRNA molecules, this enzyme counteracts the toxicity associated with the formation of D-aminoacyl-tRNA entities in vivo and helps enforce protein L-homochirality. The polypeptide is D-aminoacyl-tRNA deacylase (Deinococcus geothermalis (strain DSM 11300 / CIP 105573 / AG-3a)).